We begin with the raw amino-acid sequence, 505 residues long: Midnolin (505 aa).

A Ubiquitin-like domain is found at 32–106 (MSLAIHSTTG…LTLVPTVEAG (75 aa)). Disordered regions lie at residues 155–176 (PWHRQGPQSPERGGERPQVSDF), 228–305 (SIAT…SRKP), and 440–485 (RLRR…GLDF). Residues 238–262 (RPVSSAARVPPVSSSPSSPVSPSPV) show a composition bias toward low complexity. A compositionally biased stretch (polar residues) spans 263 to 282 (TAGTFQSHAASTTCPEQTDC). A compositionally biased stretch (low complexity) spans 283 to 300 (SPPASSNTTSTPGSSPTP).

As to quaternary structure, interacts with GCK; the interaction occurs preferentially at low glucose levels. Interacts with the proteasome.

It localises to the nucleus. It is found in the cytoplasm. The protein localises to the cytosol. Its subcellular location is the nucleolus. Its function is as follows. Facilitates the ubiquitin-independent proteasomal degradation of stimulus-induced transcription factors such as FOSB, EGR1, NR4A1, and IRF4 to the proteasome for degradation. Promotes also the degradation of other substrates such as CBX4. Plays a role in inhibiting the activity of glucokinase GCK and both glucose-induced and basal insulin secretion. This chain is Midnolin, found in Rattus norvegicus (Rat).